Reading from the N-terminus, the 317-residue chain is Ribosomal protein L11 methyltransferase (317 aa).

Positions 158, 179, 201, and 244 each coordinate S-adenosyl-L-methionine.

It belongs to the methyltransferase superfamily. PrmA family.

The protein localises to the cytoplasm. The enzyme catalyses L-lysyl-[protein] + 3 S-adenosyl-L-methionine = N(6),N(6),N(6)-trimethyl-L-lysyl-[protein] + 3 S-adenosyl-L-homocysteine + 3 H(+). In terms of biological role, methylates ribosomal protein L11. This is Ribosomal protein L11 methyltransferase from Streptococcus equi subsp. zooepidemicus (strain H70).